The following is a 238-amino-acid chain: Sugar fermentation stimulation protein homolog (238 aa).

Belongs to the SfsA family.

The polypeptide is Sugar fermentation stimulation protein homolog (Brucella abortus (strain S19)).